Consider the following 41-residue polypeptide: Large ribosomal subunit protein bL36 (41 aa).

Belongs to the bacterial ribosomal protein bL36 family.

This Methylorubrum extorquens (strain CM4 / NCIMB 13688) (Methylobacterium extorquens) protein is Large ribosomal subunit protein bL36.